The chain runs to 236 residues: 2,3,4,5-tetrahydropyridine-2,6-dicarboxylate N-acetyltransferase (236 aa).

The protein belongs to the transferase hexapeptide repeat family. DapH subfamily.

The catalysed reaction is (S)-2,3,4,5-tetrahydrodipicolinate + acetyl-CoA + H2O = L-2-acetamido-6-oxoheptanedioate + CoA. Its pathway is amino-acid biosynthesis; L-lysine biosynthesis via DAP pathway; LL-2,6-diaminopimelate from (S)-tetrahydrodipicolinate (acetylase route): step 1/3. Its function is as follows. Catalyzes the transfer of an acetyl group from acetyl-CoA to tetrahydrodipicolinate. The protein is 2,3,4,5-tetrahydropyridine-2,6-dicarboxylate N-acetyltransferase of Oceanobacillus iheyensis (strain DSM 14371 / CIP 107618 / JCM 11309 / KCTC 3954 / HTE831).